Reading from the N-terminus, the 463-residue chain is MTSTLTPREIVERLNQYIVGQDGAKRSVAVALRNRYRRTKLDPSMREEITPKNILMIGPTGVGKTEIARRLAKLVGAPFIKVEATKFTEVGYVGRDVESMVRDLVESSVRLVKEERVALVKDEAKQLADKRLIELLVPSMKKETNYKNPFEMLFSQPDKEEEEDGEEELTRANLKRKMAEKLKQGELEERTVTVEVTEQNHGFMDLFQGGAGMEQMGMNMQEMLSNMMPKKKKKRRMTVAEARGVLAEEEAQKLIDMDDVTQEAITRAEQLGIIFIDEIDKVAGKNDQGANVSREGVQRDILPIVEGSTVVTKYGAVKTDHILFIAAGAFHMAKPADLIPELQGRFPIRVELQSLSVDDFVRILVEPDNALTKQYEALLQTEGIEMKFSDEAVRKIATIASEVNQETENIGARRLHTLLEKLLEDLSFEAADIHLETLEITEQYVEEKLGSIAKNRDLSQFIL.

ATP-binding positions include Val19, 61–66, Asp277, Glu341, and Arg413; that span reads GVGKTE.

This sequence belongs to the ClpX chaperone family. HslU subfamily. As to quaternary structure, a double ring-shaped homohexamer of HslV is capped on each side by a ring-shaped HslU homohexamer. The assembly of the HslU/HslV complex is dependent on binding of ATP.

Its subcellular location is the cytoplasm. In terms of biological role, ATPase subunit of a proteasome-like degradation complex; this subunit has chaperone activity. The binding of ATP and its subsequent hydrolysis by HslU are essential for unfolding of protein substrates subsequently hydrolyzed by HslV. HslU recognizes the N-terminal part of its protein substrates and unfolds these before they are guided to HslV for hydrolysis. The sequence is that of ATP-dependent protease ATPase subunit HslU from Shouchella clausii (strain KSM-K16) (Alkalihalobacillus clausii).